We begin with the raw amino-acid sequence, 68 residues long: Beta-defensin 1 (68 aa).

The signal sequence occupies residues M1–G21. A propeptide spanning residues D22–S32 is cleaved from the precursor. Cystine bridges form between C37–C66, C44–C59, and C49–C67.

This sequence belongs to the beta-defensin family. As to quaternary structure, monomer. Homodimer.

It is found in the secreted. The protein resides in the membrane. Has bactericidal activity. May act as a ligand for C-C chemokine receptor CCR6. Positively regulates the sperm motility and bactericidal activity in a CCR6-dependent manner. Binds to CCR6 and triggers Ca2+ mobilization in the sperm which is important for its motility. This is Beta-defensin 1 (DEFB1) from Cercopithecus erythrogaster (Red-bellied monkey).